Here is a 114-residue protein sequence, read N- to C-terminus: Small ribosomal subunit protein bS6 (114 aa).

Belongs to the bacterial ribosomal protein bS6 family.

Functionally, binds together with bS18 to 16S ribosomal RNA. The chain is Small ribosomal subunit protein bS6 from Protochlamydia amoebophila (strain UWE25).